Consider the following 885-residue polypeptide: Disease resistance protein RFL1 (885 aa).

Residues 27-61 (SYIQNLSENLASLQKAMGVLNAKRDDVQGRINREE) adopt a coiled-coil conformation. In terms of domain architecture, NB-ARC spans 141 to 443 (EAAPIAEVEE…CEGFIKEKQG (303 aa)). 183-190 (GMGGVGKT) is a binding site for ATP. LRR repeat units lie at residues 517–538 (AVKRMSLMNNNFEKILGSPECV), 539–561 (ELITLFLQNNYKLVDISMEFFRC), 564–586 (SLAVLDLSENHSLSELPEEISEL), 588–610 (SLQYLDLSGTYIERLPHGLHELR), 611–633 (KLVHLKLERTRRLESISGISYLS), 634–655 (SLRTLRLRDSKTTLDTGLMKEL), and 657–679 (LLEHLELITTDISSGLVGELFCY).

It belongs to the disease resistance NB-LRR family.

Disease resistance (R) protein. The polypeptide is Disease resistance protein RFL1 (RFL1) (Arabidopsis thaliana (Mouse-ear cress)).